Reading from the N-terminus, the 227-residue chain is MLLILADLLSPQELQTARQLLRNARWDDGKDSAGTQARQAKNNQQLPRDSEAGRRIAAMVLAALERSALFLTATLPKRVFPPRVNRYGGEHNHYGDHVDSAVRQLADRHDRLRTDISCTVFLSPPDEYDGGELCIDDTFGPQRVKLPAGHAVIYPGTSVHQVRPVTRGYRMACFFWVESLVRSAEQRRLLYDMDMALLRLRQQHGESPETVALTGSYHNLLRMWADT.

The interval 27–51 (DDGKDSAGTQARQAKNNQQLPRDSE) is disordered. Residues 33–47 (AGTQARQAKNNQQLP) show a composition bias toward polar residues. The Fe2OG dioxygenase domain occupies 78 to 179 (RVFPPRVNRY…RMACFFWVES (102 aa)). Positions 97, 99, and 160 each coordinate Fe cation. Residue Arg170 participates in 2-oxoglutarate binding.

It depends on Fe(2+) as a cofactor. L-ascorbate is required as a cofactor.

The protein is PKHD-type hydroxylase Veis_3084 of Verminephrobacter eiseniae (strain EF01-2).